The sequence spans 220 residues: Protein-L-isoaspartate O-methyltransferase (220 aa).

Residue S67 is part of the active site.

This sequence belongs to the methyltransferase superfamily. L-isoaspartyl/D-aspartyl protein methyltransferase family.

Its subcellular location is the cytoplasm. The enzyme catalyses [protein]-L-isoaspartate + S-adenosyl-L-methionine = [protein]-L-isoaspartate alpha-methyl ester + S-adenosyl-L-homocysteine. In terms of biological role, catalyzes the methyl esterification of L-isoaspartyl residues in peptides and proteins that result from spontaneous decomposition of normal L-aspartyl and L-asparaginyl residues. It plays a role in the repair and/or degradation of damaged proteins. This is Protein-L-isoaspartate O-methyltransferase from Chlorobium phaeobacteroides (strain BS1).